The following is a 235-amino-acid chain: Small ribosomal subunit protein eS4 (235 aa).

One can recognise an S4 RNA-binding domain in the interval 37-100 (LPLGIIIRDI…NETYRMFQDE (64 aa)).

It belongs to the eukaryotic ribosomal protein eS4 family.

In Methanosarcina barkeri (strain Fusaro / DSM 804), this protein is Small ribosomal subunit protein eS4.